The chain runs to 435 residues: Gamma-glutamyl phosphate reductase (435 aa).

The protein belongs to the gamma-glutamyl phosphate reductase family.

The protein resides in the cytoplasm. It carries out the reaction L-glutamate 5-semialdehyde + phosphate + NADP(+) = L-glutamyl 5-phosphate + NADPH + H(+). The protein operates within amino-acid biosynthesis; L-proline biosynthesis; L-glutamate 5-semialdehyde from L-glutamate: step 2/2. Catalyzes the NADPH-dependent reduction of L-glutamate 5-phosphate into L-glutamate 5-semialdehyde and phosphate. The product spontaneously undergoes cyclization to form 1-pyrroline-5-carboxylate. This Aquifex aeolicus (strain VF5) protein is Gamma-glutamyl phosphate reductase.